The following is a 972-amino-acid chain: C-1-tetrahydrofolate synthase, mitochondrial (972 aa).

Residues 1–55 (MNVMVSFNQLRNYFLESNSLRPSKWLFQSYGTSSSANILNGKLLARKLQRSVAEE) constitute a mitochondrion transit peptide. Residues 56 to 340 (VQALKAKDRN…DLNPLELKKP (285 aa)) form a methylenetetrahydrofolate dehydrogenase and cyclohydrolase region. Substrate contacts are provided by residues 84–88 (YVRMK) and 131–133 (VQL). NADP(+) contacts are provided by residues 202–204 (GRS) and serine 227. A substrate-binding site is contributed by 299–303 (PGGVG). The tract at residues 341 to 972 (VPSDIEIANS…CENGEIVGLS (632 aa)) is formyltetrahydrofolate synthetase. ATP is bound at residue 405 to 412 (TPFGEGKS).

This sequence in the N-terminal section; belongs to the tetrahydrofolate dehydrogenase/cyclohydrolase family. It in the C-terminal section; belongs to the formate--tetrahydrofolate ligase family. Homodimer.

It localises to the mitochondrion. It catalyses the reaction (6R)-5,10-methylene-5,6,7,8-tetrahydrofolate + NADP(+) = (6R)-5,10-methenyltetrahydrofolate + NADPH. The catalysed reaction is (6R)-5,10-methenyltetrahydrofolate + H2O = (6R)-10-formyltetrahydrofolate + H(+). It carries out the reaction (6S)-5,6,7,8-tetrahydrofolate + formate + ATP = (6R)-10-formyltetrahydrofolate + ADP + phosphate. The protein operates within one-carbon metabolism; tetrahydrofolate interconversion. Functionally, mitochondrial isozyme of C-1-tetrahydrofolate synthase. The trifunctional enzyme catalyzes the interconversion of the one-carbon derivatives of tetrahydrofolate (THF) between different oxidation states by the enzymatic activities 10-formyltetrahydrofolate synthetase, 5,lO-methenyltetrahydrofolate cyclohydrolase, and 5,lO-methylenetetrahydrofolate dehydrogenase. This Schizosaccharomyces pombe (strain 972 / ATCC 24843) (Fission yeast) protein is C-1-tetrahydrofolate synthase, mitochondrial (ade9).